A 359-amino-acid polypeptide reads, in one-letter code: Methyltransferase fsa4 (359 aa).

S-adenosyl-L-methionine contacts are provided by residues 198–199, D224, 248–249, R264, and R265; these read GG and SF.

The protein belongs to the class I-like SAM-binding methyltransferase superfamily. Cation-independent O-methyltransferase family.

It participates in mycotoxin biosynthesis. In terms of biological role, methyltransferase; part of the gene cluster that mediates the biosynthesis of HIV-1 integrase inhibitor equisetin and of fusarisetin A, both trans-fused decalin-containing tetramic acids showing also antimicrobial activity. The PKS module of fsa1 together with the enoylreductase fsa3 catalyze the formation of the polyketide unit which is then conjugated to L-serine by the condensation domain of the fsa1 NRPS module. Activity of the Dieckmann cyclase domain (RED) results in release of the Dieckmann product intermediate. Diels-Alderase fsa2 is involved in endo-selective Diels-Alder cycloaddition to form the decalin ring, leading to the production of N-desmethylequisetin also called trichosetin. Subsequent N-methylation is carried out by fsa4 to give equisetin. The enzymatic gene responsible for the conversion of equisetin to fusarisetin A has not been identified yet and is probably located outside of the fsa cluster. This Fusarium sp. (strain FN080326) protein is Methyltransferase fsa4.